A 143-amino-acid polypeptide reads, in one-letter code: Nucleoside diphosphate kinase (143 aa).

ATP contacts are provided by Lys-11, Phe-59, Arg-87, Thr-93, Arg-104, and Asn-114. His-117 acts as the Pros-phosphohistidine intermediate in catalysis.

Belongs to the NDK family. As to quaternary structure, homotetramer. Requires Mg(2+) as cofactor.

It is found in the cytoplasm. It carries out the reaction a 2'-deoxyribonucleoside 5'-diphosphate + ATP = a 2'-deoxyribonucleoside 5'-triphosphate + ADP. It catalyses the reaction a ribonucleoside 5'-diphosphate + ATP = a ribonucleoside 5'-triphosphate + ADP. Major role in the synthesis of nucleoside triphosphates other than ATP. The ATP gamma phosphate is transferred to the NDP beta phosphate via a ping-pong mechanism, using a phosphorylated active-site intermediate. This chain is Nucleoside diphosphate kinase, found in Azotobacter vinelandii (strain DJ / ATCC BAA-1303).